A 465-amino-acid chain; its full sequence is Neuromedin-K receptor (465 aa).

Residues 1–84 are Extracellular-facing; sequence MATLPAAETW…TNQFVQPSWR (84 aa). Residues asparagine 23, asparagine 50, and asparagine 73 are each glycosylated (N-linked (GlcNAc...) asparagine). The chain crosses the membrane as a helical span at residues 85 to 107; the sequence is IALWSLAYGVVVAVAVLGNLIVI. Over 108–117 the chain is Cytoplasmic; the sequence is WIILAHKRMR. Residues 118–139 traverse the membrane as a helical segment; that stretch reads TVTNYFLVNLAFSDASMAAFNT. Residues 140 to 159 are Extracellular-facing; the sequence is LVNFIYALHSEWYFGANYCR. Cysteine 158 and cysteine 233 are disulfide-bonded. The helical transmembrane segment at 160–181 threads the bilayer; sequence FQNFFPITAVFASIYSMTAIAV. The Cytoplasmic portion of the chain corresponds to 182–201; the sequence is DRYMAIIDPLKPRLSATATK. Residues 202-222 traverse the membrane as a helical segment; sequence IVIGSIWILAFLLAFPQCLYS. At 223-245 the chain is on the extracellular side; that stretch reads KTKVMPGRTLCFVQWPEGPKQHF. A helical membrane pass occupies residues 246–270; the sequence is TYHIIVIILVYCFPLLIMGITYTIV. At 271-299 the chain is on the cytoplasmic side; that stretch reads GITLWGGEIPGDTCDKYHEQLKAKRKVVK. A helical transmembrane segment spans residues 300–321; it reads MMIIVVMTFAICWLPYHIYFIL. Residues 322–334 are Extracellular-facing; that stretch reads TAIYQQLNRWKYI. Residues 335–359 form a helical membrane-spanning segment; that stretch reads QQVYLASFWLAMSSTMYNPIIYCCL. Over 360–465 the chain is Cytoplasmic; that stretch reads NKRFRAGFKR…SPYTSVDEYS (106 aa). The S-palmitoyl cysteine moiety is linked to residue cysteine 374. The segment at 415–465 is disordered; the sequence is PNDADTTRSSRKKRATPRDPSFNGCSRRNSKSASATSSFISSPYTSVDEYS. The span at 445–465 shows a compositional bias: low complexity; sequence KSASATSSFISSPYTSVDEYS.

The protein belongs to the G-protein coupled receptor 1 family. The anchoring of this receptor to the plasma membrane is probably mediated by the palmitoylation of a cysteine residue.

It is found in the cell membrane. In terms of biological role, this is a receptor for the tachykinin neuropeptide neuromedin-K (neurokinin B). It is associated with G proteins that activate a phosphatidylinositol-calcium second messenger system. The rank order of affinity of this receptor to tachykinins is: neuromedin-K &gt; substance K &gt; substance P. This is Neuromedin-K receptor (TACR3) from Homo sapiens (Human).